A 43-amino-acid polypeptide reads, in one-letter code: Protein PsbN (43 aa).

The chain crosses the membrane as a helical span at residues 7-27 (LSIAIGSILLVITGFAIYTAF).

This sequence belongs to the PsbN family.

The protein resides in the cellular thylakoid membrane. Functionally, may play a role in photosystem I and II biogenesis. This chain is Protein PsbN, found in Crocosphaera subtropica (strain ATCC 51142 / BH68) (Cyanothece sp. (strain ATCC 51142)).